A 246-amino-acid polypeptide reads, in one-letter code: UPF0736 protein GWCH70_0753 (246 aa).

The protein belongs to the UPF0736 family.

The chain is UPF0736 protein GWCH70_0753 from Geobacillus sp. (strain WCH70).